The primary structure comprises 327 residues: GMP reductase (327 aa).

The active-site Thioimidate intermediate is Cys-175. Residue 204–227 (IIADGGIRTHGDIAKSIRFGASMV) participates in NADP(+) binding.

The protein belongs to the IMPDH/GMPR family. GuaC type 2 subfamily.

It catalyses the reaction IMP + NH4(+) + NADP(+) = GMP + NADPH + 2 H(+). In terms of biological role, catalyzes the irreversible NADPH-dependent deamination of GMP to IMP. It functions in the conversion of nucleobase, nucleoside and nucleotide derivatives of G to A nucleotides, and in maintaining the intracellular balance of A and G nucleotides. The protein is GMP reductase of Exiguobacterium sp. (strain ATCC BAA-1283 / AT1b).